The primary structure comprises 394 residues: Elongation factor Tu (394 aa).

One can recognise a tr-type G domain in the interval Lys-10–Val-204. Residues Gly-19–Thr-26 are G1. Position 19-26 (Gly-19–Thr-26) interacts with GTP. Position 26 (Thr-26) interacts with Mg(2+). The tract at residues Gly-60–Ser-64 is G2. Residues Asp-81–Gly-84 are G3. GTP contacts are provided by residues Asp-81–His-85 and Asn-136–Asp-139. Positions Asn-136–Asp-139 are G4. Residues Ser-174 to Leu-176 form a G5 region.

It belongs to the TRAFAC class translation factor GTPase superfamily. Classic translation factor GTPase family. EF-Tu/EF-1A subfamily. In terms of assembly, monomer.

Its subcellular location is the cytoplasm. It carries out the reaction GTP + H2O = GDP + phosphate + H(+). GTP hydrolase that promotes the GTP-dependent binding of aminoacyl-tRNA to the A-site of ribosomes during protein biosynthesis. This chain is Elongation factor Tu, found in Rickettsia conorii (strain ATCC VR-613 / Malish 7).